The chain runs to 410 residues: Segmentation protein fushi tarazu (410 aa).

3 disordered regions span residues 71-93 (TQTV…KAED), 138-157 (PAVS…QEYV), and 175-221 (SPQS…SAVS). The segment covering 76–85 (PVQPTTPPPK) has biased composition (pro residues). Pro residues predominate over residues 190 to 199 (TPPPTTPTSL). A DNA-binding region (homeobox) is located at residues 254-313 (SKRTRQTYTRYQTLELEKEFHFNRYITRRRRIDIANALSLSERQIKIWFQNRRMKSKKDR).

It belongs to the Antp homeobox family. Phosphorylated at as many as 16 sites. As to expression, expressed early in development in a striped pattern at the blastoderm stage. Later expressed in a specific subset of neuronal precursor cells, neurons and glia in the developing CNS. Between 5 and 6 hours of development, found in the midline precursor-2 cells in a segmentally repeating pattern. Expression in many other neuronal precursors follows and reaches a second peak of abundance at 9 hours of development. Expressed in the hindgut between 11-15 hours of development.

The protein resides in the nucleus. Its function is as follows. May play a role in determining neuronal identity, may be directly involved in specifying identity of individual neurons. Required during embryogenesis for the process of body segmentation. Homeotic protein, required in alternating segment primordia, it specifies the correct number of segments. The chain is Segmentation protein fushi tarazu (ftz) from Drosophila melanogaster (Fruit fly).